The sequence spans 80 residues: Small ribosomal subunit protein bS18c (80 aa).

Basic residues predominate over residues 1-19; that stretch reads MKKFISRPKRSSRRRKKTP. Residues 1-24 form a disordered region; sequence MKKFISRPKRSSRRRKKTPIKPGE.

This sequence belongs to the bacterial ribosomal protein bS18 family. As to quaternary structure, part of the 30S ribosomal subunit.

It is found in the plastid. It localises to the chloroplast. This is Small ribosomal subunit protein bS18c from Staurastrum punctulatum (Green alga).